We begin with the raw amino-acid sequence, 457 residues long: Glycine receptor subunit alpha-1 (457 aa).

The signal sequence occupies residues 1–28 (MYSFNTLRLYLWETIVFFSLAASKEAEA). Topologically, residues 29 to 250 (ARSASKPMSP…RFHLERQMGY (222 aa)) are extracellular. N66 is a glycosylation site (N-linked (GlcNAc...) asparagine). Glycine-binding residues include R93 and S157. A disulfide bridge connects residues C166 and C180. Residues E220 and D222 each contribute to the Zn(2+) site. A disulfide bond links C226 and C237. A strychnine-binding site is contributed by 230-235 (YNTGKF). Glycine is bound at residue T232. A Zn(2+)-binding site is contributed by H243. A helical membrane pass occupies residues 251–272 (YLIQMYIPSLLIVILSWISFWI). The Cytoplasmic segment spans residues 273-277 (NMDAA). Residues 278–298 (PARVGLGITTVLTMTTQSSGS) traverse the membrane as a helical segment. Residues 299–309 (RASLPKVSYVK) are Extracellular-facing. Residues 310 to 330 (AIDIWMAVCLLFVFSALLEYA) traverse the membrane as a helical segment. Residues 331-425 (AVNFVSRQHK…FIQRAKKIDK (95 aa)) lie on the Cytoplasmic side of the membrane. The interval 391–410 (KGANNSNTTNPPPAPSKSPE) is disordered. The helical transmembrane segment at 426–446 (ISRIGFPMAFLIFNMFYWIIY) threads the bilayer. The Extracellular portion of the chain corresponds to 447–457 (KIVRREDVHNQ).

It belongs to the ligand-gated ion channel (TC 1.A.9) family. Glycine receptor (TC 1.A.9.3) subfamily. GLRA1 sub-subfamily. In terms of assembly, interacts with GLRB to form heteropentameric channels; this is probably the predominant form in vivo. Heteropentamer composed of four GLRA1 subunits and one GLRB subunit. Heteropentamer composed of two GLRA1 and three GLRB. Heteropentamer composed of three GLRA1 and two GLRB. Homopentamer (in vitro). Both homopentamers and heteropentamers form functional ion channels, but their characteristics are subtly different. Detected on spinal cord neurons (at protein level). Detected in spinal cord.

The protein resides in the postsynaptic cell membrane. The protein localises to the synapse. It is found in the perikaryon. It localises to the cell projection. Its subcellular location is the dendrite. The protein resides in the cell membrane. It carries out the reaction chloride(in) = chloride(out). Its activity is regulated as follows. Channel opening is triggered by extracellular glycine. Channel characteristics depend on the subunit composition; heteropentameric channels are activated by lower glycine levels and display faster desensitization. Subunit of heteromeric glycine-gated chloride channels. Plays an important role in the down-regulation of neuronal excitability. Contributes to the generation of inhibitory postsynaptic currents. Channel activity is potentiated by ethanol. Potentiation of channel activity by intoxicating levels of ethanol contribute to the sedative effects of ethanol. This is Glycine receptor subunit alpha-1 (GLRA1) from Bos taurus (Bovine).